The primary structure comprises 1218 residues: MAEPRMPRPATSPTRDKSHSPYRESPSRRLRDVETGYNPPQNPPYPPQRNGTEPYPPSPSSRTADWEPIMSNPNPMSQSDLGRKKSLIRPERNRIDRDHPNYYYRKHAANMEVLPSTTGNDPVVEDLAEHRTVSSGSTQQDTSIEEEVVGNPQKSRMPGKLEPVGKKKAPRKLVRKDTRNLTEEEKRRQKELDKIKPPSIWNIYCAVVTFWAPDCLLQCFGMPARAQRRAWREKVGLISIILLIAAFVGFLTFGFTQAVCAAPGLRLKINHVDRGYMIFHGGAYNLDGSMHPAARGIPLDANVLYDLPHKYGGQDGSFMFQKVNGACKGLITLAEGSDVPTNSDGDLAWYFPCTAFNQDGSSEVNLTSPYYLGYACHTTAKARNTFYSLKKAGDVYFTWDDIKNKSRNLAVYSGSVVDLDLLKWFNKSQVAWPQQFDDLRENGRVRGMDLTHVLQSATDKQVGRCLTQIAKVGSIDTESVGCIASKVVLYVSLVFILAIVAAKFFLALAFQWFLARRFAAAKTSQTSDPKKRAKQIEDWTDDIYKPAPKITDPASTVTGSDGRTSKRGSMFLPQTSRFTSPYAVDRRSSRPPPTTMTSQSSNAKLLPGGNPYKSGFNSSQNTLDLHSRMSVGASRSSLLLSGQETRYSAVMDNLDPNGPVGFIHENVVPQPPPEWQPFGYPLAHVICLVTAYSEGEDGIRTTLDSIATTDYPNSHKAILVVCDGMIKGKGEAQSTPDIVLGMMGDFVIAPEDVQAFSYVAVSSGAKRHNMAKVYAGFYDYGPKSRIDPTKQQRVPMMVVVKCGTPDEATKSKPGNRGKRDSQIILMSFLQKVMFDERMTELEYEMFNGLWKVTGMSPDFYEMVLMVDADTKVFPDSLTHMVSAMVKDPEIMGLCGETKIANKNASWVSRIQVFEYFISHHLSKSFESVFGGVTCLPGCFCMYRIKSPKGGQNYWVPILANPDIVEHYSENVVDTLHKKNLLLLGEDRYLSTLMLKTFPKRKQVFVPQAVCKTTVPDEFKVLLSQRRRWINSTVHNLMELVLVRDLCGTFCFSMQFVVFIELIGTLVLPAAISFTFYLIIISIVKKPVPVIPLVLLALILGLPAILIVLTAHRWSYILWMGIYLLSLPIWNFVLPAYAFWKFDDFSWGETRKTAGEKTKKAGLEYEGEFDSSKITMKRWGDFERERRAQANGSVWNQQPPTRPPSGYGSMHGFEPYRDY.

Disordered regions lie at residues Met1 to Asn93 and Thr132 to Lys190. A compositionally biased stretch (basic and acidic residues) spans Thr14–Glu34. Asn50 carries an N-linked (GlcNAc...) asparagine glycan. Composition is skewed to polar residues over residues Ser71–Asp80 and Val133–Thr142. Basic and acidic residues predominate over residues Arg175–Lys190. Residue Asn180 is glycosylated (N-linked (GlcNAc...) asparagine). 2 helical membrane passes run Ile200–Phe220 and Val235–Phe255. Asn365, Asn404, and Asn426 each carry an N-linked (GlcNAc...) asparagine glycan. The helical transmembrane segment at Val487–Ala507 threads the bilayer. Disordered stretches follow at residues Pro548 to Met570 and Tyr582 to Leu606. Residues Pro553–Gly562 are compositionally biased toward polar residues. N-linked (GlcNAc...) asparagine glycans are attached at residues Asn617, Asn903, and Asn1030. 3 helical membrane-spanning segments follow: residues Ile1062–Ile1082, Val1087–Val1107, and Tyr1115–Ala1135. The segment at Gln1188–Tyr1218 is disordered. Residues Ala1189–Pro1198 are compositionally biased toward polar residues. A glycan (N-linked (GlcNAc...) asparagine) is linked at Asn1190.

The protein belongs to the chitin synthase family. Class IV subfamily. In terms of processing, maximal activity requires trypsin activation, suggesting a zymogenic nature.

It is found in the cell membrane. The catalysed reaction is [(1-&gt;4)-N-acetyl-beta-D-glucosaminyl](n) + UDP-N-acetyl-alpha-D-glucosamine = [(1-&gt;4)-N-acetyl-beta-D-glucosaminyl](n+1) + UDP + H(+). Activity is stimulated by Mg(2+), and is more inhibited by polyoxin D than by nikkomycin. Functionally, polymerizes chitin, a structural polymer of the cell wall and septum, by transferring the sugar moiety of UDP-GlcNAc to the non-reducing end of the growing chitin polymer. CHS4 synthesizes a large amount of chitin and appears to play a role in the process of cell separation. CHS4 is particularly well suited for functioning at the higher temperatures associated with its poorly characterized saprophic environment and with human infection. The chain is Chitin synthase 4 from Exophiala dermatitidis (strain ATCC 34100 / CBS 525.76 / NIH/UT8656) (Black yeast).